The primary structure comprises 99 residues: Putative endopeptidase RzpR (99 aa).

The protein is Putative endopeptidase RzpR (rzpR) of Escherichia coli (strain K12).